Reading from the N-terminus, the 480-residue chain is Acetyl-coenzyme A carboxylase carboxyl transferase subunit beta, chloroplastic (480 aa).

In terms of domain architecture, CoA carboxyltransferase N-terminal spans 212–480; that stretch reads LWVQCENCYG…FPLNQINKYK (269 aa). Residues Cys216, Cys219, Cys235, and Cys238 each contribute to the Zn(2+) site. A C4-type zinc finger spans residues 216–238; the sequence is CENCYGLNYQKFFRSKMNICERC.

Belongs to the AccD/PCCB family. Acetyl-CoA carboxylase is a heterohexamer composed of biotin carboxyl carrier protein, biotin carboxylase and 2 subunits each of ACCase subunit alpha and ACCase plastid-coded subunit beta (accD). The cofactor is Zn(2+).

The protein resides in the plastid. It is found in the chloroplast stroma. It carries out the reaction N(6)-carboxybiotinyl-L-lysyl-[protein] + acetyl-CoA = N(6)-biotinyl-L-lysyl-[protein] + malonyl-CoA. It participates in lipid metabolism; malonyl-CoA biosynthesis; malonyl-CoA from acetyl-CoA: step 1/1. Its function is as follows. Component of the acetyl coenzyme A carboxylase (ACC) complex. Biotin carboxylase (BC) catalyzes the carboxylation of biotin on its carrier protein (BCCP) and then the CO(2) group is transferred by the transcarboxylase to acetyl-CoA to form malonyl-CoA. This Illicium oligandrum (Star anise) protein is Acetyl-coenzyme A carboxylase carboxyl transferase subunit beta, chloroplastic.